The primary structure comprises 411 residues: LL-diaminopimelate aminotransferase (411 aa).

Residues Tyr-16 and Gly-43 each contribute to the substrate site. Pyridoxal 5'-phosphate contacts are provided by residues Tyr-73, Ala-109 to Lys-110, Tyr-133, Asn-188, Tyr-219, and Ser-247 to Ser-249. The substrate site is built by Lys-110, Tyr-133, and Asn-188. Lys-250 carries the N6-(pyridoxal phosphate)lysine modification. Residues Arg-258 and Asn-293 each contribute to the pyridoxal 5'-phosphate site. Positions 293 and 389 each coordinate substrate.

The protein belongs to the class-I pyridoxal-phosphate-dependent aminotransferase family. LL-diaminopimelate aminotransferase subfamily. In terms of assembly, homodimer. It depends on pyridoxal 5'-phosphate as a cofactor.

It catalyses the reaction (2S,6S)-2,6-diaminopimelate + 2-oxoglutarate = (S)-2,3,4,5-tetrahydrodipicolinate + L-glutamate + H2O + H(+). Its pathway is amino-acid biosynthesis; L-lysine biosynthesis via DAP pathway; LL-2,6-diaminopimelate from (S)-tetrahydrodipicolinate (aminotransferase route): step 1/1. In terms of biological role, involved in the synthesis of meso-diaminopimelate (m-DAP or DL-DAP), required for both lysine and peptidoglycan biosynthesis. Catalyzes the direct conversion of tetrahydrodipicolinate to LL-diaminopimelate. The chain is LL-diaminopimelate aminotransferase from Methanobrevibacter smithii (strain ATCC 35061 / DSM 861 / OCM 144 / PS).